The chain runs to 262 residues: ATP synthase subunit a (262 aa).

Transmembrane regions (helical) follow at residues 50–70 (TMIMTWITMALVLLFAWACTK), 107–127 (MMPIIVTFFIYIVFANLLGLI), 141–161 (FGLALIVVLLIHYHGLKANGV), 194–214 (LYGNIFAGEVLIAVLLGLINI), 218–238 (VFGGFIPSVIWLAFSVFVGFV), and 239–259 (QAFVFSMLTIAYVSQFAAHEA).

The protein belongs to the ATPase A chain family. As to quaternary structure, F-type ATPases have 2 components, CF(1) - the catalytic core - and CF(0) - the membrane proton channel. CF(1) has five subunits: alpha(3), beta(3), gamma(1), delta(1), epsilon(1). CF(0) has three main subunits: a(1), b(2) and c(9-12). The alpha and beta chains form an alternating ring which encloses part of the gamma chain. CF(1) is attached to CF(0) by a central stalk formed by the gamma and epsilon chains, while a peripheral stalk is formed by the delta and b chains.

Its subcellular location is the cell membrane. In terms of biological role, key component of the proton channel; it plays a direct role in the translocation of protons across the membrane. The polypeptide is ATP synthase subunit a (Desulforamulus reducens (strain ATCC BAA-1160 / DSM 100696 / MI-1) (Desulfotomaculum reducens)).